Consider the following 160-residue polypeptide: Transcription elongation factor GreA (160 aa).

Residues 14-38 (IKAELASLKKERPEVIKAIAEAREE) are a coiled coil.

This sequence belongs to the GreA/GreB family.

Its function is as follows. Necessary for efficient RNA polymerase transcription elongation past template-encoded arresting sites. The arresting sites in DNA have the property of trapping a certain fraction of elongating RNA polymerases that pass through, resulting in locked ternary complexes. Cleavage of the nascent transcript by cleavage factors such as GreA or GreB allows the resumption of elongation from the new 3'terminus. GreA releases sequences of 2 to 3 nucleotides. The chain is Transcription elongation factor GreA from Maridesulfovibrio salexigens (strain ATCC 14822 / DSM 2638 / NCIMB 8403 / VKM B-1763) (Desulfovibrio salexigens).